The sequence spans 205 residues: Ribosomal RNA small subunit methyltransferase G (205 aa).

S-adenosyl-L-methionine contacts are provided by residues Gly-66, Phe-71, 119–120 (IE), and Arg-135.

Belongs to the methyltransferase superfamily. RNA methyltransferase RsmG family.

The protein localises to the cytoplasm. The enzyme catalyses guanosine(527) in 16S rRNA + S-adenosyl-L-methionine = N(7)-methylguanosine(527) in 16S rRNA + S-adenosyl-L-homocysteine. Specifically methylates the N7 position of guanine in position 527 of 16S rRNA. The protein is Ribosomal RNA small subunit methyltransferase G of Rhizobium etli (strain ATCC 51251 / DSM 11541 / JCM 21823 / NBRC 15573 / CFN 42).